A 171-amino-acid chain; its full sequence is Small ribosomal subunit protein uS4 (171 aa).

Residues 101–165 (RRLQTVVYRK…SSLSDELHPE (65 aa)) enclose the S4 RNA-binding domain. Residues 148–171 (SSVGFDEHSSLSDELHPERAEAQE) are disordered. A compositionally biased stretch (basic and acidic residues) spans 152–171 (FDEHSSLSDELHPERAEAQE).

This sequence belongs to the universal ribosomal protein uS4 family. As to quaternary structure, part of the 30S ribosomal subunit. Contacts protein S5. The interaction surface between S4 and S5 is involved in control of translational fidelity.

Its function is as follows. One of the primary rRNA binding proteins, it binds directly to 16S rRNA where it nucleates assembly of the body of the 30S subunit. With S5 and S12 plays an important role in translational accuracy. This Haloarcula marismortui (strain ATCC 43049 / DSM 3752 / JCM 8966 / VKM B-1809) (Halobacterium marismortui) protein is Small ribosomal subunit protein uS4.